The sequence spans 75 residues: DNA-directed RNA polymerase subunit omega (75 aa).

This sequence belongs to the RNA polymerase subunit omega family. In cyanobacteria the RNAP catalytic core is composed of 2 alpha, 1 beta, 1 beta', 1 gamma and 1 omega subunit. When a sigma factor is associated with the core the holoenzyme is formed, which can initiate transcription.

The catalysed reaction is RNA(n) + a ribonucleoside 5'-triphosphate = RNA(n+1) + diphosphate. In terms of biological role, promotes RNA polymerase assembly. Latches the N- and C-terminal regions of the beta' subunit thereby facilitating its interaction with the beta and alpha subunits. The polypeptide is DNA-directed RNA polymerase subunit omega (Prochlorococcus marinus (strain MIT 9313)).